The following is a 194-amino-acid chain: MKLYKDLIGNSHDDLLTDRYEIKVGDVTFEVKTKMITKDLNVVVNNNSLGGSISTTVDNNNSITLSTNLEDEFENVEAAGTFQINNLVEQLRLVETSFDKKSYLAYMKLYIKDLINHIKQQPSNSDNEKIEHIQKGIQSFVKTMMDGENFKKYSFFTGSSMDANGLVALMYYKDDDPTTPTFVFIKYGLLQVDV.

Residues 1 to 194 (MKLYKDLIGN…IKYGLLQVDV (194 aa)) form the TCTP domain.

It belongs to the TCTP family.

Its subcellular location is the cytoplasm. Its function is as follows. Involved in calcium binding and microtubule stabilization. The sequence is that of Translationally-controlled tumor protein homolog 2 from Dictyostelium discoideum (Social amoeba).